Consider the following 200-residue polypeptide: Ras-related protein Rab-10 (200 aa).

11 residues coordinate GTP: serine 18, glycine 19, valine 20, glycine 21, lysine 22, threonine 23, cysteine 24, asparagine 35, threonine 36, serine 40, and threonine 41. Residue threonine 23 participates in Mg(2+) binding. 2 short sequence motifs (switch) span residues 32–46 and 64–81; these read DAFNTTFISTIGIDF and DTAGQERFHTITTSYYRG. Positions 41 and 64 each coordinate Mg(2+). Residue glycine 67 participates in GTP binding. The residue at position 73 (threonine 73) is a Phosphothreonine; by LRRK2. Residue lysine 102 is modified to N6-acetyllysine. Lysine 102 participates in a covalent cross-link: Glycyl lysine isopeptide (Lys-Gly) (interchain with G-Cter in ubiquitin). Asparagine 122, lysine 123, aspartate 125, and methionine 126 together coordinate GTP. Lysine 136 is covalently cross-linked (Glycyl lysine isopeptide (Lys-Gly) (interchain with G-Cter in ubiquitin)). GTP is bound by residues serine 152, alanine 153, and lysine 154. Residue lysine 154 forms a Glycyl lysine isopeptide (Lys-Gly) (interchain with G-Cter in ubiquitin) linkage. S-geranylgeranyl cysteine attachment occurs at residues cysteine 199 and cysteine 200.

The protein belongs to the small GTPase superfamily. Rab family. Interacts with MYO5A; mediates the transport to the plasma membrane of SLC2A4/GLUT4 storage vesicles. Interacts with GDI1 and with GDI2; negatively regulates RAB10 association with membranes and activation. Interacts (GDP-bound form) with LLGL1; the interaction is direct and promotes RAB10 association with membranes and activation through competition with the Rab inhibitor GDI1. Interacts with EXOC4; probably associates with the exocyst. Interacts (GTP-bound form) with MICALCL, MICAL1, MICAL3, EHBP1 and EHBP1L1; at least in case of MICAL1 two molecules of RAB10 can bind to one molecule of MICAL1. Interacts with TBC1D13. Interacts with SEC16A. Interacts with CHM and CHML. Interacts with LRRK2; interaction facilitates phosphorylation of Thr-73. Interacts (when phosphorylated on Thr-73) with RILPL1 and RILPL2. Interacts with TBC1D21. Interacts with MARCKS. Mg(2+) is required as a cofactor. In terms of processing, ubiquitinated upon Legionella pneumophila infection. Ubiquitination does not lead to proteasomal degradation. Post-translationally, phosphorylation of Thr-73 in the switch II region by LRRK2 prevents the association of dRAB regulatory proteins, including CHM, CHML and RAB GDP dissociation inhibitors GDI1 and GDI2. Phosphorylation of Thr-73 by LRRK2 is stimulated by RAB29 and RAB32. Phosphorylation by LRRK2 is required for localization to stressed lysosomes. As to expression, expressed in the hippocampus. Expressed in neutrophils (at protein level). Expressed in the testis (at protein level).

It is found in the cytoplasmic vesicle membrane. The protein resides in the golgi apparatus membrane. Its subcellular location is the golgi apparatus. It localises to the trans-Golgi network membrane. The protein localises to the endosome membrane. It is found in the recycling endosome membrane. The protein resides in the cytoplasmic vesicle. Its subcellular location is the phagosome membrane. It localises to the cytoplasm. The protein localises to the cytoskeleton. It is found in the cilium basal body. The protein resides in the endoplasmic reticulum membrane. Its subcellular location is the perinuclear region. It localises to the lysosome. The enzyme catalyses GTP + H2O = GDP + phosphate + H(+). Its activity is regulated as follows. Regulated by guanine nucleotide exchange factors (GEFs) DENND4C and RABIF which promote the exchange of bound GDP for free GTP. Regulated by GTPase activating proteins (GAPs) including TBC1D21 which increase the GTP hydrolysis activity. Inhibited by GDP dissociation inhibitors GDI1 and GDI2 which prevent Rab-GDP dissociation. Functionally, the small GTPases Rab are key regulators of intracellular membrane trafficking, from the formation of transport vesicles to their fusion with membranes. Rabs cycle between an inactive GDP-bound form and an active GTP-bound form that is able to recruit to membranes different set of downstream effectors directly responsible for vesicle formation, movement, tethering and fusion. That Rab is mainly involved in the biosynthetic transport of proteins from the Golgi to the plasma membrane. Regulates, for instance, SLC2A4/GLUT4 glucose transporter-enriched vesicles delivery to the plasma membrane. In parallel, it regulates the transport of TLR4, a toll-like receptor to the plasma membrane and therefore may be important for innate immune response. Also plays a specific role in asymmetric protein transport to the plasma membrane. In neurons, it is involved in axonogenesis through regulation of vesicular membrane trafficking toward the axonal plasma membrane. In epithelial cells, it regulates transport from the Golgi to the basolateral membrane. May play a role in the basolateral recycling pathway and in phagosome maturation. May play a role in endoplasmic reticulum dynamics and morphology controlling tubulation along microtubules and tubules fusion. Together with LRRK2, RAB8A, and RILPL1, it regulates ciliogenesis. When phosphorylated by LRRK2 on Thr-73, binds RILPL1 and inhibits ciliogenesis. Participates in the export of a subset of neosynthesized proteins through a Rab8-Rab10-Rab11-dependent endososomal export route. Targeted to and stabilized on stressed lysosomes through LRRK2 phosphorylation where it promotes the extracellular release of lysosomal content through EHBP1 and EHNP1L1 effector proteins. (Microbial infection) Upon Legionella pneumophila infection promotes endoplasmic reticulum recruitment and bacterial replication. Plays a role in remodeling the Legionella-containing vacuole (LCV) into an endoplasmic reticulum-like vacuole. This is Ras-related protein Rab-10 from Homo sapiens (Human).